The primary structure comprises 297 residues: Protein phosphatase PTC7 homolog (297 aa).

A mitochondrion-targeting transit peptide spans 1-27 (MLSVLSYGRLVARAVIGGLSQTDSRDY). The PPM-type phosphatase domain maps to 28-292 (SLVSASFGFG…DDITVLLSIV (265 aa)). Asp71, Gly72, and Asp216 together coordinate Mn(2+).

It belongs to the PP2C family. Mg(2+) is required as a cofactor. The cofactor is Mn(2+).

The protein resides in the mitochondrion matrix. It carries out the reaction O-phospho-L-seryl-[protein] + H2O = L-seryl-[protein] + phosphate. It catalyses the reaction O-phospho-L-threonyl-[protein] + H2O = L-threonyl-[protein] + phosphate. Functionally, protein phosphatase which positively regulates biosynthesis of the ubiquinone, coenzyme Q. Dephosphorylates the ubiquinone biosynthesis protein coq7 which is likely to lead to its activation. This Danio rerio (Zebrafish) protein is Protein phosphatase PTC7 homolog (pptc7).